The following is a 51-amino-acid chain: Magnetosome protein Mms5 (51 aa).

Over 1 to 12 (MLSAKGVSLGLG) the chain is Lumenal. The tract at residues 9–16 (LGLGLGLG) is LG region. The helical transmembrane segment at 13–33 (LGLGAWGPVLLGVVGVAGAIA) threads the bilayer. Topologically, residues 34–51 (LYGYYKNRNAEPAAAEAV) are cytoplasmic.

Belongs to the magnetosome MamD/Mms5 family. Seen in gels as a band of about 5 kDa, with an N-terminus that corresponds to residue 8, suggesting it may undergo N-terminal cleavage.

It localises to the magnetosome membrane. Might be involved in magnetite crystal growth. This chain is Magnetosome protein Mms5, found in Paramagnetospirillum magneticum (strain ATCC 700264 / AMB-1) (Magnetospirillum magneticum).